Here is a 595-residue protein sequence, read N- to C-terminus: RuBisCO large subunit-binding protein subunit beta, chloroplastic (595 aa).

The N-terminal 49 residues, 1–49, are a transit peptide targeting the chloroplast; the sequence is MASTFSATTSSCNLSSSAAISSFPLAAGKRNANKVVLPRKNRNVKVSAM.

Belongs to the chaperonin (HSP60) family. In terms of assembly, oligomer of probably six alpha and six beta subunits.

The protein localises to the plastid. It localises to the chloroplast. Functionally, this protein binds RuBisCO small and large subunits and is implicated in the assembly of the enzyme oligomer. In Pisum sativum (Garden pea), this protein is RuBisCO large subunit-binding protein subunit beta, chloroplastic.